The chain runs to 697 residues: PAN2-PAN3 deadenylation complex subunit PAN3 (697 aa).

The C3H1-type zinc finger occupies 7–36 (TAKDTLCKNILIYGYCKYENKGCAFSHNRQ). The tract at residues 40-67 (QQQQATNTSNNSTSVITPNSANSTASSA) is disordered. 2 short sequence motifs (PABPC-interacting motif-2 (PAM-2)) span residues 69-89 (LSSK…VSNL) and 106-126 (FKPE…TQRP). A disordered region spans residues 106-240 (FKPENGVSEP…SAPTPGSETP (135 aa)). Positions 119–153 (DSPTTQRPFTSKRFNVSTPSFTPTNFDFANNSNAD) are enriched in polar residues. Low complexity predominate over residues 172–187 (QNQQQQQQQQQQQQKQ). Positions 212 to 224 (GVSQSSPSTNPYF) are enriched in polar residues. The pseudokinase domain stretch occupies residues 308–576 (QSLSHSNLPE…DLNEFSQRLT (269 aa)). ATP is bound by residues Arg-361, 416 to 423 (DYYPNSIS), and 470 to 471 (SK). Residues 577–615 (PKMFNIIDSLQNSSDFIEGQLTSELENARLFRLMTKLNY) are a coiled coil. A knob domain region spans residues 616-697 (LIHDNSNSEN…IDTKFRLMRE (82 aa)).

It belongs to the protein kinase superfamily. PAN3 family. Homodimer. Forms a heterotrimer with a catalytic subunit PAN2 to form the poly(A)-nuclease (PAN) deadenylation complex. Interacts (via PAM-2 motif) with poly(A)-binding protein PAB1 (via PABC domain), conferring substrate specificity of the enzyme complex.

It localises to the cytoplasm. Regulatory subunit of the poly(A)-nuclease (PAN) deadenylation complex, one of two cytoplasmic mRNA deadenylases involved in mRNA turnover. PAN specifically shortens poly(A) tails of RNA and the activity is stimulated by poly(A)-binding protein PAB1. PAN deadenylation is followed by rapid degradation of the shortened mRNA tails by the CCR4-NOT complex. Deadenylated mRNAs are then degraded by two alternative mechanisms, namely exosome-mediated 3'-5' exonucleolytic degradation, or deadenylation-dependent mRNA decaping and subsequent 5'-3' exonucleolytic degradation by XRN1. May also be involved in post-transcriptional maturation of mRNA poly(A) tails. PAN3 acts as a positive regulator for PAN activity, recruiting the catalytic subunit PAN2 to mRNA via its interaction with RNA and with PAB1. The chain is PAN2-PAN3 deadenylation complex subunit PAN3 from Candida albicans (strain SC5314 / ATCC MYA-2876) (Yeast).